Consider the following 293-residue polypeptide: ELMO domain-containing protein 2 (293 aa).

An ELMO domain is found at 126-282 (QHEKLLIKLW…KFHEKIKGLL (157 aa)).

Acts as a GTPase-activating protein (GAP) toward guanine nucleotide exchange factors like ARL2, ARL3, ARF1 and ARF6, but not for GTPases outside the Arf family. The chain is ELMO domain-containing protein 2 (ELMOD2) from Bos taurus (Bovine).